The sequence spans 420 residues: Exodeoxyribonuclease 7 large subunit (420 aa).

The protein belongs to the XseA family. Heterooligomer composed of large and small subunits.

The protein localises to the cytoplasm. It carries out the reaction Exonucleolytic cleavage in either 5'- to 3'- or 3'- to 5'-direction to yield nucleoside 5'-phosphates.. Its function is as follows. Bidirectionally degrades single-stranded DNA into large acid-insoluble oligonucleotides, which are then degraded further into small acid-soluble oligonucleotides. The chain is Exodeoxyribonuclease 7 large subunit from Helicobacter pylori (strain ATCC 700392 / 26695) (Campylobacter pylori).